The following is a 690-amino-acid chain: MSAILQYDSVSKGTYSVKPKPTESLGNEFSEGLFVPLIGGKEPIEYVKLRENLCTKVLNELEEITTHTTYDSNARVLRQLCEHASEPVDETGLLRTAIVCDKSSNSMHLKFYEQLKDDMEKIGWKNFVVLNLKAHRDLKSCFRVIKGGSFGLGVLSYDIEKLDEKTVLVLEDVEDCDRRLLSSLVEALSSLVRHSKLQGCLYTIFNLKIPLEMFDTSLDSKFLSNVKTKVFNMKASTEILESLFTSIEESLSLKFGWRTRRFFRSMFYERSWSVERVIECIRYSILTHFYGNALSIIEHLIYQKDFHLISPLHLTTLRTVPSFQRHIEQRLEIGDLESINYVEKMLNDDTYFQEMVIQMCENLLYRERLLRTQAKIWHELEMAVKTTTRISFADYLETFLQGDWLSSPQYKSICQAILRMNSTKALACLDYLNENIFTGNQTMKCLEIHQELSELIRNSSTNYLEPVEVRMQNYSGTKHTRKVVESGFDKSIIDFSKILKKIVGLLDEEVQYGCLGTESIDMYPFYEVLFYDYCRPLNQAFASGHQRSVIHSSCMDPEYYVGDEKKIDSEFSNAEKDGKDLISWLPDLSILYKLYSESGALLNLYDWYIAFSEHLQAGKENLKEDDNHPRESPQGNLQRELNELDEDKRKLEEAKLQSRFLFGLEELRFLGLIKPTARKTDHVMKTIYHQ.

It belongs to the ORC3 family. ORC is composed of six subunits. ORC interacts with cdc18, recruiting it to the ars1 origin of replication.

Its subcellular location is the nucleus. Its function is as follows. Component of the origin recognition complex (ORC) that binds origins of replication. It has a role in both chromosomal replication and mating type transcriptional silencing. ORC binds to multiple sites within the ars1 origin of DNA replication in an ATP-independent manner. The sequence is that of Origin recognition complex subunit 3 (orc3) from Schizosaccharomyces pombe (strain 972 / ATCC 24843) (Fission yeast).